The primary structure comprises 565 residues: NAD-dependent malic enzyme (565 aa).

The active-site Proton donor is Tyr104. Arg157 lines the NAD(+) pocket. The active-site Proton acceptor is Lys175. Residues Glu246, Asp247, and Asp270 each contribute to the a divalent metal cation site. The NAD(+) site is built by Asp270 and Asn418.

The protein belongs to the malic enzymes family. As to quaternary structure, homotetramer. The cofactor is Mg(2+). Mn(2+) is required as a cofactor.

The catalysed reaction is (S)-malate + NAD(+) = pyruvate + CO2 + NADH. It carries out the reaction oxaloacetate + H(+) = pyruvate + CO2. The protein is NAD-dependent malic enzyme of Salmonella agona (strain SL483).